The primary structure comprises 807 residues: Glycerol-3-phosphate acyltransferase (807 aa).

Residues 309–314 carry the HXXXXD motif motif; that stretch reads CHRSHM.

The protein belongs to the GPAT/DAPAT family.

It localises to the cell inner membrane. It carries out the reaction sn-glycerol 3-phosphate + an acyl-CoA = a 1-acyl-sn-glycero-3-phosphate + CoA. Its pathway is phospholipid metabolism; CDP-diacylglycerol biosynthesis; CDP-diacylglycerol from sn-glycerol 3-phosphate: step 1/3. The polypeptide is Glycerol-3-phosphate acyltransferase (Aeromonas hydrophila subsp. hydrophila (strain ATCC 7966 / DSM 30187 / BCRC 13018 / CCUG 14551 / JCM 1027 / KCTC 2358 / NCIMB 9240 / NCTC 8049)).